Here is a 536-residue protein sequence, read N- to C-terminus: uncharacterized protein (536 aa).

The SWIM-type zinc-finger motif lies at 71-98; sequence LFVIVKSGCSCPSGRICRHMLAVFLYVY. Residues 482 to 528 are a coiled coil; sequence YKEAARYLKKLRTLYKKAKKQKVWERYIQLLSSHYKRLRALQEELQK.

This is an uncharacterized protein from Bacillus subtilis (strain 168).